The primary structure comprises 193 residues: Putative manganese efflux pump MntP (193 aa).

The next 6 membrane-spanning stretches (helical) occupy residues 3-23, 37-57, 66-86, 109-131, 146-166, and 171-191; these read PLSI…AAIG, VRAG…GWML, AAFD…HMIV, LALA…SLAF, CTLS…ALIG, and ILGG…HLSG.

It belongs to the MntP (TC 9.B.29) family.

Its subcellular location is the cell inner membrane. Its function is as follows. Probably functions as a manganese efflux pump. This is Putative manganese efflux pump MntP from Xanthomonas campestris pv. campestris (strain 8004).